The primary structure comprises 178 residues: Pyruvate synthase subunit PorC (178 aa).

As to quaternary structure, heterotetramer of one alpha, one beta, one delta and one gamma chain.

The catalysed reaction is 2 oxidized [2Fe-2S]-[ferredoxin] + pyruvate + CoA = 2 reduced [2Fe-2S]-[ferredoxin] + acetyl-CoA + CO2 + H(+). The sequence is that of Pyruvate synthase subunit PorC (porC) from Methanocaldococcus jannaschii (strain ATCC 43067 / DSM 2661 / JAL-1 / JCM 10045 / NBRC 100440) (Methanococcus jannaschii).